We begin with the raw amino-acid sequence, 746 residues long: Protein Niban 2 (746 aa).

Gly2 is lipidated: N-myristoyl glycine. Positions 68–192 (RIVFSGNLFQ…WQAVLQDCIR (125 aa)) constitute a PH domain. A phosphoserine mark is found at Ser568, Ser574, Ser601, and Ser603. The interval 590–746 (GEEYSNSGGG…EDSAGVQTEF (157 aa)) is disordered. A Phosphothreonine modification is found at Thr606. Residues Ser609, Ser624, Ser638, Ser641, Ser646, Ser665, Ser681, Ser692, and Ser696 each carry the phosphoserine modification. Low complexity predominate over residues 671–693 (PLLNGAPAGESPQPKAAPEASSP). Residues 720-746 (GEQVSSPSSHPALHTTTEDSAGVQTEF) are compositionally biased toward polar residues.

It belongs to the Niban family. Phosphorylated at Ser-641, Ser-646, Ser-692 and Ser-696 by the BRAF/MKK/ERK signaling cascade. In melanoma cells, the C-terminal phosphorylation may prevent targeting to the plasma membrane. Post-translationally, as apoptosis proceeds, degraded via an proteasome-independent pathway, probably by caspases.

It localises to the cytoplasm. It is found in the cytosol. The protein resides in the cell junction. The protein localises to the adherens junction. Its subcellular location is the membrane. Functionally, may play a role in apoptosis suppression. May promote melanoma cell invasion in vitro. This chain is Protein Niban 2, found in Homo sapiens (Human).